Reading from the N-terminus, the 75-residue chain is Small ribosomal subunit protein bS18 (75 aa).

It belongs to the bacterial ribosomal protein bS18 family. In terms of assembly, part of the 30S ribosomal subunit. Forms a tight heterodimer with protein bS6.

Functionally, binds as a heterodimer with protein bS6 to the central domain of the 16S rRNA, where it helps stabilize the platform of the 30S subunit. This chain is Small ribosomal subunit protein bS18, found in Shewanella amazonensis (strain ATCC BAA-1098 / SB2B).